The sequence spans 354 residues: 3-isopropylmalate dehydrogenase (354 aa).

76–87 (GPRWDGAKERPE) contributes to the NAD(+) binding site. 4 residues coordinate substrate: Arg94, Arg104, Arg130, and Asp215. Positions 215, 239, and 243 each coordinate Mg(2+). 273-285 (GSAPDIAGKNKAN) is a binding site for NAD(+).

This sequence belongs to the isocitrate and isopropylmalate dehydrogenases family. LeuB type 1 subfamily. As to quaternary structure, homodimer. Mg(2+) is required as a cofactor. Mn(2+) serves as cofactor.

It is found in the cytoplasm. The catalysed reaction is (2R,3S)-3-isopropylmalate + NAD(+) = 4-methyl-2-oxopentanoate + CO2 + NADH. Its pathway is amino-acid biosynthesis; L-leucine biosynthesis; L-leucine from 3-methyl-2-oxobutanoate: step 3/4. Catalyzes the oxidation of 3-carboxy-2-hydroxy-4-methylpentanoate (3-isopropylmalate) to 3-carboxy-4-methyl-2-oxopentanoate. The product decarboxylates to 4-methyl-2 oxopentanoate. The chain is 3-isopropylmalate dehydrogenase from Bacillus anthracis.